We begin with the raw amino-acid sequence, 367 residues long: Glutamate 5-kinase (367 aa).

K17 is a binding site for ATP. Residues S57, D144, and N156 each contribute to the substrate site. Residues 176 to 177 (SD) and 217 to 223 (TGGMTSK) each bind ATP. A PUA domain is found at 279-357 (AGALTLDEGA…SELPGELRRP (79 aa)).

Belongs to the glutamate 5-kinase family.

It is found in the cytoplasm. The catalysed reaction is L-glutamate + ATP = L-glutamyl 5-phosphate + ADP. It functions in the pathway amino-acid biosynthesis; L-proline biosynthesis; L-glutamate 5-semialdehyde from L-glutamate: step 1/2. Catalyzes the transfer of a phosphate group to glutamate to form L-glutamate 5-phosphate. The polypeptide is Glutamate 5-kinase (Mycolicibacterium paratuberculosis (strain ATCC BAA-968 / K-10) (Mycobacterium paratuberculosis)).